Reading from the N-terminus, the 165-residue chain is E3 ubiquitin-protein ligase RNF181 (165 aa).

Residues 88–129 (CPVCLLEFEEEETVIEMPCHHLFHSNCILPWLSKTNSCPLCR) form an RING-type; atypical zinc finger. The tract at residues 136-165 (DDSYEEHKKDKARRQQQQHRLENLHGAMYT) is disordered. At T165 the chain carries Phosphothreonine.

This sequence belongs to the RNF181 family. In terms of assembly, directly interacts with ITGA2B and, as a result, with integrin ITGA2B/ITGB3. There is no evidence that integrin ITGA2B/ITGB3 is an endogenous substrate for RNF181-directed ubiquitination. In terms of processing, auto-ubiquitinated as part of the enzymatic reaction.

It catalyses the reaction S-ubiquitinyl-[E2 ubiquitin-conjugating enzyme]-L-cysteine + [acceptor protein]-L-lysine = [E2 ubiquitin-conjugating enzyme]-L-cysteine + N(6)-ubiquitinyl-[acceptor protein]-L-lysine.. It participates in protein modification; protein ubiquitination. Functionally, E3 ubiquitin-protein ligase which accepts ubiquitin from an E2 ubiquitin-conjugating enzyme in the form of a thioester and then directly transfers the ubiquitin to targeted substrates. Catalyzes monoubiquitination of 26S proteasome subunit PSMC2/RPT1. The sequence is that of E3 ubiquitin-protein ligase RNF181 (Rnf181) from Rattus norvegicus (Rat).